A 477-amino-acid chain; its full sequence is Glycogen synthase (477 aa).

Lys-15 is an ADP-alpha-D-glucose binding site.

The protein belongs to the glycosyltransferase 1 family. Bacterial/plant glycogen synthase subfamily.

It carries out the reaction [(1-&gt;4)-alpha-D-glucosyl](n) + ADP-alpha-D-glucose = [(1-&gt;4)-alpha-D-glucosyl](n+1) + ADP + H(+). It functions in the pathway glycan biosynthesis; glycogen biosynthesis. In terms of biological role, synthesizes alpha-1,4-glucan chains using ADP-glucose. The sequence is that of Glycogen synthase from Serratia proteamaculans (strain 568).